The sequence spans 266 residues: Probable catechol O-methyltransferase 1 (266 aa).

Residues I56, E78, S86, E106, V107, A135, and D162 each contribute to the S-adenosyl-L-methionine site. Position 162 (D162) interacts with Mg(2+). A substrate-binding site is contributed by K165. Mg(2+) contacts are provided by D190 and N191. N191 is a binding site for substrate.

This sequence belongs to the class I-like SAM-binding methyltransferase superfamily. Cation-dependent O-methyltransferase family. Mg(2+) is required as a cofactor.

It localises to the cytoplasm. The protein resides in the nucleus. The catalysed reaction is a catechol + S-adenosyl-L-methionine = a guaiacol + S-adenosyl-L-homocysteine + H(+). This is Probable catechol O-methyltransferase 1 from Schizosaccharomyces pombe (strain 972 / ATCC 24843) (Fission yeast).